The chain runs to 266 residues: Streptomycin 3''-kinase (266 aa).

The active-site Proton acceptor is the aspartate 154.

The protein belongs to the aminoglycoside phosphotransferase family.

The enzyme catalyses streptomycin + ATP = streptomycin 3''-phosphate + ADP + H(+). The aminoglycoside phosphotransferases achieve inactivation of their antibiotic substrates by phosphorylation. In Klebsiella pneumoniae, this protein is Streptomycin 3''-kinase (str).